Reading from the N-terminus, the 2193-residue chain is MGSQVSTQRSGSHENSNSASEGSTINYTTINYYKDAYAASAGRQDMSQDPKKFTDPVMDVIHEMAPPLKSPSAEACGYSDRVAQLTIGNSTITTQEAANIVIAYGEWPEYCPDTDATAVDKPTRPDVSVNRFFTLDTKSWAKDSKGWYWKFPDVLTEVGVFGQNAQFHYLYRSGFCVHVQCNASKFHQGALLVAVLPEYVLGTIAGGTGNENSHPPYATTQPGQVGAVLTHPYVLDAGIPLSQLTVCPHQWINLRTNNCATIIVPYMNTVPFDSALNHCNFGLLVVPVVPLDFNAGATSEIPITVTIAPMCAEFAGLRQAVKQGIPTELKPGTNQFLTTDDGVSAPILPGFHPTPPIHIPGEVHNLLEICRVETILEVNNLKTNETTPMQRLCFPVSVQSKTGELCAAFRADPGRDGPWQSTILGQLCRYYTQWSGSLEVTFMFAGSFMATGKMLIAYTPPGGNVPADRITAMLGTHVIWDFGLQSSVTLVVPWISNTHYRAHARAGYFDYYTTGIITIWYQTNYVVPIGAPTTAYIVALAAAQDNFTMKLCKDTEDIEQTANIQGDPIADMIDQTVNNQVNRSLTALQVLPTAADTEASSHRLGTGVVPALQAAETGASSNASDKNLIETRCVLNHHSTQETAIGNFFSRAGLVSIITMPTTGTQNTDGYVNWDIDLMGYAQLRRKCELFTYMRFDAEFTFVVAKPNGELVPQLLQYMYVPPGAPKPTSRDSFAWQTATNPSVFVKMTDPPAQVSVPFMSPASAYQWFYDGYPTFGEHLQANDLDYGQCPNNMMGTFSIRTVGTEKSPHSITLRVYMRIKHVRAWIPRPLRNQPYLFKTNPNYKGNDIKCTSTSRDKITTLGKFGQQSGAIYVGNYRVVNRHLATHNDWANLVWEDSSRDLLVSSTTAQGCDTIARCNCQTGVYYCSSKRKHYPVSFTKPSLIFVEASEYYPARYQSHLMLAVGHSEPGDCGGILRCQHGVVGIVSTGGNGLVGFADVRDLLWLDEEAMEQGVSDYIKGLGDAFGVGFTDAVSREVEALKNHLIGSEGAVEKILKNLVKLISALVIVVRSDYDMVTLTATLALIGCHGSPWAWIKAKTASILGIPIVQKQSASWLKKFNDMANAAKGLEWISSKISKFIDWLKEKIIPAAKEKVEFLNNLKQLPLLENQISNLEQSAASQEDLEAMFGNVSYLAHFCRKFQPLYATEAKRVYALEKRMNNYMQFKSKHRIEPVCLIIRGSPGTGKSLATGIIARAIADKYHSSVYSLPPDPDHFDGYKQQVVTVMDDLCQNPDGKDMSLFCQMVSTVDFIPPMASLEEKGVSFTSKFVIASTNASNIVVPTVSDSDAIRRRFYMDCDIEVTDSYKTDLGRLDAGRAAKLCTENNTANFKRCSPLVCGKAIQLRDRKSKVRYSIDTVVSELIREYNNRSAIGNTIEALFQGPLKFKPIRISLEEKPAPDAISDLLASVDSEEVRQYCREQGWIIPETPTNVERHLNRAVLVMQSIATVVAVVSLVYVIYKLFAGFQGAYSGAPKQALKKPVLRTATVQGPSLDFALSLLRRNIRQVQTDQGHFTMLGVRDRLAILPRHSQPGKTIWVEHKLINVLDAVELVDEQGVNLELTLVTLDTNEKFRDVTKFIPETITGASDATLVINTEHMPSMFVPVGDVVQYGFLNLSGKPTHRTMMYNFPTKAGQCGGVVTSVGKIIGIHIGGNGRQGFCAGLKRGYFASEQGEIQWMKPNKETGRLNINGPTRTKLEPSVFHDVFEGNKEPAVLTSKDPRLEVDFEQALFSKYVGNTLHEPDEYVTQAALHYANQLKQLDININKMSMEEACYGTEYLEAIDLHTSAGYPYSALGVKKRDILDPITRDTTKMKFYMDKYGLDLPYSTYVKDELRSLDKIKKGKSRLIEASSLNDSVYLRMTFGHLYETFHANPGTVTGSAVGCNPDVFWSKLPILLPGSLFAFDYSGYDASLSPVWFRALEVVLREIGYSEEAVSLIEGINHTHHVYRNKTYCVLGGMPSGCSGTSIFNSMINNIIIRTLLIKTFKGIDLDELNMVAYGDDVLASYPFPIDCSELAKTGKEYGLTMTPADKSPCFNEVTWENATFLKRGFLPDHQFPFLIHPTMPMREIHESIRWTKDARNTQDHVRSLCLLAWHNGKEEYEKFVSTIRSVPIGKALAIPNFENLRRNWLELF.

The interval M1–S23 is disordered. A lipid anchor (N-myristoyl glycine; by host) is attached at G2. The Cytoplasmic segment spans residues G2 to Q1503. The tract at residues G566 to L588 is amphipathic alpha-helix. Residues H883 and D901 each act as for protease 2A activity in the active site. Residues C918 and C920 each coordinate Zn(2+). C972 functions as the For protease 2A activity in the catalytic mechanism. Zn(2+) contacts are provided by C978 and H980. The segment at S1112–L1184 is membrane-binding. The segment at S1112–T1250 is oligomerization. Positions S1133–S1137 are RNA-binding. An SF3 helicase domain is found at E1216–A1374. Residue G1240 to S1247 coordinates ATP. The Zn(2+) site is built by C1381, C1392, and C1397. The C4-type; degenerate zinc finger occupies C1381–C1397. The segment at E1424–I1431 is RNA-binding. Residues I1435–Q1440 are oligomerization. The stretch at S1504 to Y1519 is an intramembrane region. At K1520–F2193 the chain is on the cytoplasmic side. An O-(5'-phospho-RNA)-tyrosine modification is found at Y1529. The Peptidase C3 domain occupies G1549–F1727. Residues H1588, E1619, and C1695 each act as for protease 3C activity in the active site. The RdRp catalytic domain maps to G1958–E2074. Residues D1964 and D2060 each contribute to the Mg(2+) site.

The protein belongs to the picornaviruses polyprotein family. In terms of assembly, interacts with capsid protein VP1 and capsid protein VP3 to form heterotrimeric protomers. As to quaternary structure, interacts with capsid protein VP0, and capsid protein VP3 to form heterotrimeric protomers. Five protomers subsequently associate to form pentamers which serve as building blocks for the capsid. Interacts with capsid protein VP2, capsid protein VP3 and capsid protein VP4 following cleavage of capsid protein VP0. Interacts with capsid protein VP1 and capsid protein VP3 in the mature capsid. In terms of assembly, interacts with capsid protein VP0 and capsid protein VP1 to form heterotrimeric protomers. Five protomers subsequently associate to form pentamers which serve as building blocks for the capsid. Interacts with capsid protein VP4 in the mature capsid. Interacts with protein 2C; this interaction may be important for virion morphogenesis. As to quaternary structure, interacts with capsid protein VP1 and capsid protein VP3. Homodimer. In terms of assembly, homohexamer; forms a hexameric ring structure with 6-fold symmetry characteristic of AAA+ ATPases. Interacts (via N-terminus) with host RTN3 (via reticulon domain); this interaction is important for viral replication. Interacts with capsid protein VP3; this interaction may be important for virion morphogenesis. As to quaternary structure, interacts with protein 3CD. Homodimer. Interacts with host GBF1. Interacts (via GOLD domain) with host ACBD3 (via GOLD domain); this interaction allows the formation of a viral protein 3A/ACBD3 heterotetramer with a 2:2 stoichiometry, which will stimulate the recruitment of host PI4KB in order to synthesize PI4P at the viral RNA replication sites. In terms of assembly, interacts with RNA-directed RNA polymerase. As to quaternary structure, interacts with host IFIH1/MDA5; this interaction inhibits host IFIH1. Protein 3CD: Interacts with protein 3AB and with RNA-directed RNA polymerase. In terms of assembly, interacts with Viral protein genome-linked and with protein 3CD. The cofactor is Mg(2+). Post-translationally, specific enzymatic cleavages in vivo by the viral proteases yield processing intermediates and the mature proteins. Myristoylation is required for the formation of pentamers during virus assembly. Further assembly of 12 pentamers and a molecule of genomic RNA generates the provirion. In terms of processing, during virion maturation, immature virions are rendered infectious following cleavage of VP0 into VP4 and VP2. This maturation seems to be an autocatalytic event triggered by the presence of RNA in the capsid and it is followed by a conformational change infectious virion. Post-translationally, myristoylation is required during RNA encapsidation and formation of the mature virus particle. VPg is uridylylated by the polymerase into VPg-pUpU. This acts as a nucleotide-peptide primer for the genomic RNA replication.

The protein resides in the virion. It is found in the host cytoplasm. It localises to the host cytoplasmic vesicle membrane. Its subcellular location is the host nucleus. The catalysed reaction is a ribonucleoside 5'-triphosphate + H2O = a ribonucleoside 5'-diphosphate + phosphate + H(+). It catalyses the reaction Selective cleavage of Tyr-|-Gly bond in the picornavirus polyprotein.. It carries out the reaction RNA(n) + a ribonucleoside 5'-triphosphate = RNA(n+1) + diphosphate. The enzyme catalyses Selective cleavage of Gln-|-Gly bond in the poliovirus polyprotein. In other picornavirus reactions Glu may be substituted for Gln, and Ser or Thr for Gly.. Replication or transcription is subject to high level of random mutations by the nucleotide analog ribavirin. Forms an icosahedral capsid of pseudo T=3 symmetry with capsid proteins VP2 and VP3. The capsid is 300 Angstroms in diameter, composed of 60 copies of each capsid protein and enclosing the viral positive strand RNA genome. Capsid protein VP1 mainly forms the vertices of the capsid. Capsid protein VP1 interacts with host cell receptor to provide virion attachment to target host cells. This attachment induces virion internalization. After binding to its receptor, the capsid undergoes conformational changes. Capsid protein VP1 N-terminus (that contains an amphipathic alpha-helix) and capsid protein VP4 are externalized. Together, they shape a pore in the host membrane through which viral genome is translocated to host cell cytoplasm. In terms of biological role, forms an icosahedral capsid of pseudo T=3 symmetry with capsid proteins VP2 and VP3. The capsid is 300 Angstroms in diameter, composed of 60 copies of each capsid protein and enclosing the viral positive strand RNA genome. Its function is as follows. Lies on the inner surface of the capsid shell. After binding to the host receptor, the capsid undergoes conformational changes. Capsid protein VP4 is released, Capsid protein VP1 N-terminus is externalized, and together, they shape a pore in the host membrane through which the viral genome is translocated into the host cell cytoplasm. Functionally, component of immature procapsids, which is cleaved into capsid proteins VP4 and VP2 after maturation. Allows the capsid to remain inactive before the maturation step. Cysteine protease that cleaves viral polyprotein and specific host proteins. It is responsible for the autocatalytic cleavage between the P1 and P2 regions, which is the first cleavage occurring in the polyprotein. Also cleaves the host translation initiation factor EIF4G1, in order to shut down the capped cellular mRNA translation. Inhibits the host nucleus-cytoplasm protein and RNA trafficking by cleaving host members of the nuclear pores. Counteracts stress granule formation probably by antagonizing its assembly or promoting its dissassembly. Cleaves and inhibits host IFIH1/MDA5, thereby inhibiting the type-I IFN production and the establishment of the antiviral state. Cleaves and inhibits host MAVS, thereby inhibiting the type-I IFN production and the establishment of the antiviral state. In terms of biological role, plays an essential role in the virus replication cycle by acting as a viroporin. Creates a pore in the host endoplasmic reticulum and as a consequence releases Ca2+ in the cytoplasm of infected cell. In turn, high levels of cytoplasmic calcium may trigger membrane trafficking and transport of viral ER-associated proteins to viroplasms, sites of viral genome replication. Its function is as follows. Induces and associates with structural rearrangements of intracellular membranes. Displays RNA-binding, nucleotide binding and NTPase activities. May play a role in virion morphogenesis and viral RNA encapsidation by interacting with the capsid protein VP3. Functionally, localizes the viral replication complex to the surface of membranous vesicles. Together with protein 3CD binds the Cis-Active RNA Element (CRE) which is involved in RNA synthesis initiation. Acts as a cofactor to stimulate the activity of 3D polymerase, maybe through a nucleid acid chaperone activity. Localizes the viral replication complex to the surface of membranous vesicles. It inhibits host cell endoplasmic reticulum-to-Golgi apparatus transport and causes the disassembly of the Golgi complex, possibly through GBF1 interaction. This would result in depletion of MHC, trail receptors and IFN receptors at the host cell surface. Plays an essential role in viral RNA replication by recruiting ACBD3 and PI4KB at the viral replication sites, thereby allowing the formation of the rearranged membranous structures where viral replication takes place. In terms of biological role, acts as a primer for viral RNA replication and remains covalently bound to viral genomic RNA. VPg is uridylylated prior to priming replication into VPg-pUpU. The oriI viral genomic sequence may act as a template for this. The VPg-pUpU is then used as primer on the genomic RNA poly(A) by the RNA-dependent RNA polymerase to replicate the viral genome. During genome replication, the VPg-RNA linkage is removed by the host TDP2, thereby accelerating replication. During the late stage of the replication cycle, host TDP2 is excluded from sites of viral RNA synthesis and encapsidation, allowing for the generation of progeny virions. Its function is as follows. Involved in the viral replication complex and viral polypeptide maturation. It exhibits protease activity with a specificity and catalytic efficiency that is different from protease 3C. Protein 3CD lacks polymerase activity. Protein 3CD binds to the 5'UTR of the viral genome. Functionally, major viral protease that mediates proteolytic processing of the polyprotein. Cleaves host EIF5B, contributing to host translation shutoff. Also cleaves host PABPC1, contributing to host translation shutoff. Binds and inhibits host IFIH1/MDA5, thereby inhibiting the type-I IFN production and the establishment of the antiviral state. Cleaves host MAP3K7/TAK1, resulting in inhibition of TRAF6-triggered NF-kappa-B induction. Cleaves host NLRP1, triggers host N-glycine-mediated degradation of the autoinhibitory NLRP1 N-terminal fragment. Replicates the viral genomic RNA on the surface of intracellular membranes. May form linear arrays of subunits that propagate along a strong head-to-tail interaction called interface-I. Covalently attaches UMP to a tyrosine of VPg, which is used to prime RNA synthesis. The positive stranded RNA genome is first replicated at virus induced membranous vesicles, creating a dsRNA genomic replication form. This dsRNA is then used as template to synthesize positive stranded RNA genomes. ss(+)RNA genomes are either translated, replicated or encapsidated. The sequence is that of Genome polyprotein from Homo sapiens (Human).